The primary structure comprises 491 residues: Protein phosphatase ppm-1.G (491 aa).

One can recognise a PPM-type phosphatase domain in the interval 23–486 (SYACTTMQGW…DNMTVICTTF (464 aa)). 2 residues coordinate Mn(2+): Asp-57 and Gly-58. Residues 112–125 (KDIGDEGKPKKAGG) are compositionally biased toward basic and acidic residues. Disordered regions lie at residues 112-136 (KDIGDEGKPKKAGGEADSEDEADRI) and 170-294 (GDVS…EEMV). Acidic residues-rich tracts occupy residues 173 to 192 (SDDSEDEDEDEEEAEEQDDT) and 260 to 294 (ATEEEDEDDSDKEFVADEEEDDEDAEDEQSDEEMV). 2 residues coordinate Mn(2+): Asp-428 and Asp-477.

The protein belongs to the PP2C family. The cofactor is Mg(2+). Mn(2+) is required as a cofactor.

It carries out the reaction O-phospho-L-seryl-[protein] + H2O = L-seryl-[protein] + phosphate. It catalyses the reaction O-phospho-L-threonyl-[protein] + H2O = L-threonyl-[protein] + phosphate. In Caenorhabditis elegans, this protein is Protein phosphatase ppm-1.G.